Reading from the N-terminus, the 124-residue chain is Small ribosomal subunit protein uS12 (124 aa).

Residues M1 to Q25 form a disordered region. D89 is modified (3-methylthioaspartic acid).

It belongs to the universal ribosomal protein uS12 family. As to quaternary structure, part of the 30S ribosomal subunit. Contacts proteins S8 and S17. May interact with IF1 in the 30S initiation complex.

In terms of biological role, with S4 and S5 plays an important role in translational accuracy. Its function is as follows. Interacts with and stabilizes bases of the 16S rRNA that are involved in tRNA selection in the A site and with the mRNA backbone. Located at the interface of the 30S and 50S subunits, it traverses the body of the 30S subunit contacting proteins on the other side and probably holding the rRNA structure together. The combined cluster of proteins S8, S12 and S17 appears to hold together the shoulder and platform of the 30S subunit. This chain is Small ribosomal subunit protein uS12, found in Borrelia turicatae (strain 91E135).